The primary structure comprises 338 residues: Fructose-1,6-bisphosphatase class 1 1 (338 aa).

4 residues coordinate Mg(2+): glutamate 94, aspartate 116, leucine 118, and aspartate 119. Substrate is bound by residues 119 to 122 (DGSS), asparagine 210, and lysine 276. Glutamate 282 provides a ligand contact to Mg(2+).

The protein belongs to the FBPase class 1 family. As to quaternary structure, homotetramer. Mg(2+) serves as cofactor.

It localises to the cytoplasm. It catalyses the reaction beta-D-fructose 1,6-bisphosphate + H2O = beta-D-fructose 6-phosphate + phosphate. It functions in the pathway carbohydrate biosynthesis; gluconeogenesis. This chain is Fructose-1,6-bisphosphatase class 1 1, found in Paraburkholderia phymatum (strain DSM 17167 / CIP 108236 / LMG 21445 / STM815) (Burkholderia phymatum).